The chain runs to 464 residues: Soluble pyridine nucleotide transhydrogenase (464 aa).

35–44 contributes to the FAD binding site; sequence EDKSQVGGNC.

It belongs to the class-I pyridine nucleotide-disulfide oxidoreductase family. FAD serves as cofactor.

The protein localises to the cytoplasm. The catalysed reaction is NAD(+) + NADPH = NADH + NADP(+). Functionally, conversion of NADPH, generated by peripheral catabolic pathways, to NADH, which can enter the respiratory chain for energy generation. The polypeptide is Soluble pyridine nucleotide transhydrogenase (Hahella chejuensis (strain KCTC 2396)).